The following is a 251-amino-acid chain: Pyrroloquinoline-quinone synthase (251 aa).

It belongs to the PqqC family.

It carries out the reaction 6-(2-amino-2-carboxyethyl)-7,8-dioxo-1,2,3,4,7,8-hexahydroquinoline-2,4-dicarboxylate + 3 O2 = pyrroloquinoline quinone + 2 H2O2 + 2 H2O + H(+). The protein operates within cofactor biosynthesis; pyrroloquinoline quinone biosynthesis. Its function is as follows. Ring cyclization and eight-electron oxidation of 3a-(2-amino-2-carboxyethyl)-4,5-dioxo-4,5,6,7,8,9-hexahydroquinoline-7,9-dicarboxylic-acid to PQQ. The protein is Pyrroloquinoline-quinone synthase of Pseudomonas putida (strain GB-1).